We begin with the raw amino-acid sequence, 189 residues long: Protein jagunal homolog (189 aa).

Topologically, residues 1–34 are cytoplasmic; sequence MSSRGVRAAGTDGNDFQNRQRIAQHYQESAQYKS. Residues 35-55 form a helical membrane-spanning segment; the sequence is VLKWFFVPHFLILVFMWLKVG. Topologically, residues 56–75 are lumenal; sequence SEFLRYNFGWKNAFFERLDM. A helical membrane pass occupies residues 76–96; the sequence is PAAYPWEYVWCLSFIPIVLAL. Residues 97 to 105 lie on the Cytoplasmic side of the membrane; the sequence is SSFQRNKLK. A helical membrane pass occupies residues 106–126; that stretch reads VLHYAYYAEFICGIFPCMIGL. Residues 127 to 150 are Lumenal-facing; that stretch reads GGQLPELLEYANDMEGSNTPTFKG. The chain crosses the membrane as a helical span at residues 151–171; sequence IFPMVIIWYIFFAVALQIHGF. Residues 172-189 are Cytoplasmic-facing; it reads SMYFMHHLAAAWAPVKRD.

This sequence belongs to the jagunal family.

Its subcellular location is the endoplasmic reticulum membrane. The chain is Protein jagunal homolog from Caenorhabditis briggsae.